Consider the following 442-residue polypeptide: Trigger factor (442 aa).

The region spanning 163–248 (NDLVTINYCI…ILNVEEKQEN (86 aa)) is the PPIase FKBP-type domain.

The protein belongs to the FKBP-type PPIase family. Tig subfamily.

Its subcellular location is the cytoplasm. The enzyme catalyses [protein]-peptidylproline (omega=180) = [protein]-peptidylproline (omega=0). Its function is as follows. Involved in protein export. Acts as a chaperone by maintaining the newly synthesized protein in an open conformation. Functions as a peptidyl-prolyl cis-trans isomerase. In Buchnera aphidicola subsp. Schizaphis graminum (strain Sg), this protein is Trigger factor.